The chain runs to 296 residues: NAD kinase (296 aa).

The active-site Proton acceptor is the Asp-72. Residues 72 to 73 (DG), 146 to 147 (ND), Arg-157, Lys-174, Asp-176, 187 to 192 (TAYALS), and Gln-247 each bind NAD(+).

Belongs to the NAD kinase family. Requires a divalent metal cation as cofactor.

It localises to the cytoplasm. It carries out the reaction NAD(+) + ATP = ADP + NADP(+) + H(+). In terms of biological role, involved in the regulation of the intracellular balance of NAD and NADP, and is a key enzyme in the biosynthesis of NADP. Catalyzes specifically the phosphorylation on 2'-hydroxyl of the adenosine moiety of NAD to yield NADP. In Pseudomonas syringae pv. syringae (strain B728a), this protein is NAD kinase.